Consider the following 547-residue polypeptide: Natural resistance-associated macrophage protein 1 (547 aa).

The segment at 1-30 (MTGDKDPQSVSRPNYGSISHPPSSEPQQEP) is disordered. Residues 1–54 (MTGDKDPQSVSRPNYGSISHPPSSEPQQEPLRTTYLSEKIPIPDTEPGTFSLRK) lie on the Cytoplasmic side of the membrane. The span at 8–17 (QSVSRPNYGS) shows a compositional bias: polar residues. Residues 21 to 30 (PPSSEPQQEP) show a composition bias toward low complexity. A helical transmembrane segment spans residues 55–75 (LWAFTGPGFLMSIAFLDPGNI). The Extracellular segment spans residues 76-81 (ESDLQA). The chain crosses the membrane as a helical span at residues 82–102 (GAVAGFKLLWVLLWATVLGLL). The Cytoplasmic portion of the chain corresponds to 103 to 139 (CQRLAARLGVVTGKDLGEICHLYYPKVPRTLLWLTIE). A helical transmembrane segment spans residues 140–160 (LAIVGSDMQEVIGTAIAFSLL). Residues 161–164 (SAGR) are Extracellular-facing. Residues 165–185 (IPLWGGVLITIVDTFFFLFLD) traverse the membrane as a helical segment. Over 186-193 (NYGLRKLE) the chain is Cytoplasmic. The helical transmembrane segment at 194–214 (AFFGILITIMALTFGYEYVVA) threads the bilayer. The Extracellular portion of the chain corresponds to 215–240 (RPAQVALLQGLLLPSCPGCGRPELLQ). The chain crosses the membrane as a helical span at residues 241–261 (AVGIVGAIIMPHNIYLHSALV). Residues 262–286 (KSREIDRSRRPDIREANMYFLIEAS) are Cytoplasmic-facing. Residues 287 to 307 (IALSVSFFINLFVVAVFGQAF) form a helical membrane-spanning segment. At 308-346 (YQQTNEAAFNVCANSSLHDYAKIFPRNNLTVEVDIYQGG) the chain is on the extracellular side. Residues N321 and N335 are each glycosylated (N-linked (GlcNAc...) asparagine). Residues 347–367 (VMLGCVFGPAALYIWAVGLLA) form a helical membrane-spanning segment. The Cytoplasmic segment spans residues 368 to 394 (AGQSSTMTGTYAGQFVMEGFLRLRWSR). The helical transmembrane segment at 395–415 (FARVLLTRSCAILPTVLVVVF) threads the bilayer. At 416-432 (RDLKDLSGLNDLLNVLQ) the chain is on the extracellular side. Residues 433–453 (SLLLPFAVLPILTFTSMPALM) form a helical membrane-spanning segment. Residues 454–464 (QEFANGRLSKA) lie on the Cytoplasmic side of the membrane. Residues 465-485 (ITSFIMALVCAINLYFVVIYL) form a helical membrane-spanning segment. Residues 486–492 (PSLPHPA) are Extracellular-facing. Residues 493–513 (YFILVALLAIVYLGLTTYLVW) form a helical membrane-spanning segment. The Cytoplasmic portion of the chain corresponds to 514-547 (TCFIAHGVTLLAHSSHQHFLYGLPDVEEKGKISG).

Belongs to the NRAMP family.

Its subcellular location is the late endosome membrane. The protein resides in the lysosome membrane. It catalyses the reaction Zn(2+)(in) + H(+)(out) = Zn(2+)(out) + H(+)(in). It carries out the reaction Fe(2+)(in) + H(+)(out) = Fe(2+)(out) + H(+)(in). The enzyme catalyses Mn(2+)(in) + H(+)(out) = Mn(2+)(out) + H(+)(in). Its function is as follows. Macrophage-specific antiporter that fluxes metal ions in either direction against a proton gradient. Localized to late endosomal lysosomal membranes, delivers bivalent cations from the cytosol into these acidic compartments where they may directly affect antimicrobial activity. Involved in iron metabolism and host natural resistance to infection with intracellular parasites. Pathogen resistance involves sequestration of Fe(2+) and Mn(2+), cofactors of both prokaryotic and eukaryotic catalases and superoxide dismutases, not only to protect the macrophage against its own generation of reactive oxygen species, but to deny the cations to the pathogen for synthesis of its protective enzymes. This is Natural resistance-associated macrophage protein 1 (SLC11A1) from Canis lupus familiaris (Dog).